The following is a 587-amino-acid chain: Phosphatidylinositol-3-phosphatase SAC1 (587 aa).

The Cytoplasmic portion of the chain corresponds to 1-520 (MAATTYERLK…SPLSVPRDLK (520 aa)). Residues 122–451 (MNHVLSMDGF…ANACAKQYAG (330 aa)) enclose the SAC domain. Residues 452–587 (TGALKTDFTR…PRLVQKEKID (136 aa)) are essential for phosphatidylinositol-4-phosphate phosphatase activity. At lysine 456 the chain carries N6-acetyllysine. A helical membrane pass occupies residues 521–541 (FLALPIIMVVAFSMCIICLLM). The Lumenal portion of the chain corresponds to 542-548 (AGDTWTE). Residues 549 to 569 (TLAYVLFWGVASIGTFFIILY) form a helical membrane-spanning segment. Over 570–587 (NGKDFVDAPRLVQKEKID) the chain is Cytoplasmic.

In terms of assembly, interacts with TMEM39A. Interacts with SEC23A and SEC24A; this interaction is reduced in the absence of TMEM39A. Interacts with PLEKHA3 and VAPA and/or VAPB to form a ternary complex.

Its subcellular location is the endoplasmic reticulum membrane. The protein resides in the golgi apparatus membrane. The catalysed reaction is a 1,2-diacyl-sn-glycero-3-phospho-(1D-myo-inositol-3-phosphate) + H2O = a 1,2-diacyl-sn-glycero-3-phospho-(1D-myo-inositol) + phosphate. It catalyses the reaction a 1,2-diacyl-sn-glycero-3-phospho-(1D-myo-inositol 4-phosphate) + H2O = a 1,2-diacyl-sn-glycero-3-phospho-(1D-myo-inositol) + phosphate. In terms of biological role, phosphoinositide phosphatase which catalyzes the hydrolysis of phosphatidylinositol 4-phosphate (PtdIns(4)P), phosphatidylinositol 3-phosphate (PtdIns(3)P) and has low activity towards phosphatidylinositol-3,5-bisphosphate (PtdIns(3,5)P2). Shows a very robust PtdIns(4)P phosphatase activity when it binds PtdIns(4)P in a 'cis' configuration in the cellular environment, with much less activity seen when it binds PtdIns(4)P in 'trans' configuration. PtdIns(4)P phosphatase activity (when it binds PtdIns(4)P in 'trans' configuration) is enhanced in the presence of PLEKHA3. The sequence is that of Phosphatidylinositol-3-phosphatase SAC1 (SACM1L) from Bos taurus (Bovine).